Here is a 214-residue protein sequence, read N- to C-terminus: Probable nicotinate-nucleotide adenylyltransferase (214 aa).

It belongs to the NadD family.

The catalysed reaction is nicotinate beta-D-ribonucleotide + ATP + H(+) = deamido-NAD(+) + diphosphate. The protein operates within cofactor biosynthesis; NAD(+) biosynthesis; deamido-NAD(+) from nicotinate D-ribonucleotide: step 1/1. Its function is as follows. Catalyzes the reversible adenylation of nicotinate mononucleotide (NaMN) to nicotinic acid adenine dinucleotide (NaAD). The polypeptide is Probable nicotinate-nucleotide adenylyltransferase (Aeromonas hydrophila subsp. hydrophila (strain ATCC 7966 / DSM 30187 / BCRC 13018 / CCUG 14551 / JCM 1027 / KCTC 2358 / NCIMB 9240 / NCTC 8049)).